The chain runs to 211 residues: FMN-dependent NADH:quinone oxidoreductase (211 aa).

17-19 (SYS) lines the FMN pocket.

It belongs to the azoreductase type 1 family. In terms of assembly, homodimer. It depends on FMN as a cofactor.

It carries out the reaction 2 a quinone + NADH + H(+) = 2 a 1,4-benzosemiquinone + NAD(+). It catalyses the reaction N,N-dimethyl-1,4-phenylenediamine + anthranilate + 2 NAD(+) = 2-(4-dimethylaminophenyl)diazenylbenzoate + 2 NADH + 2 H(+). In terms of biological role, quinone reductase that provides resistance to thiol-specific stress caused by electrophilic quinones. Also exhibits azoreductase activity. Catalyzes the reductive cleavage of the azo bond in aromatic azo compounds to the corresponding amines. The protein is FMN-dependent NADH:quinone oxidoreductase of Bacillus pumilus (strain SAFR-032).